The primary structure comprises 95 residues: Osteocalcin-2 (95 aa).

A signal peptide spans 1-23 (MRTLSLLTLLALAALCLSDLTDA). A propeptide spanning residues 24–49 (KPSGPESDKAFMSKQEGNKVVNRLRR) is cleaved from the precursor. One can recognise a Gla domain in the interval 46–92 (RLRRYLGASVPSPDPLEPTREQCELNPACDELSDQYGLKTAYKRIYG). Ca(2+) contacts are provided by E62, E66, E69, and D75. A disulfide bridge connects residues C68 and C74.

It belongs to the osteocalcin/matrix Gla protein family. Post-translationally, gamma-carboxyglutamate residues are formed by vitamin K dependent carboxylation by GGCX. These residues are essential for the binding of calcium. Carboxylated in a Ptprv/Esp-dependent process. Decarboxylation promotes the hormone activity. In terms of tissue distribution, bone.

The protein localises to the secreted. In terms of biological role, the carboxylated form is one of the main organic components of the bone matrix, which constitutes 1-2% of the total bone protein: it acts as a negative regulator of bone formation and is required to limit bone formation without impairing bone resorption or mineralization. The carboxylated form binds strongly to apatite and calcium. Its function is as follows. The uncarboxylated form acts as a hormone secreted by osteoblasts, which regulates different cellular processes, such as energy metabolism, male fertility and brain development. Regulates of energy metabolism by acting as a hormone favoring pancreatic beta-cell proliferation, insulin secretion and sensitivity and energy expenditure. Uncarboxylated osteocalcin hormone also promotes testosterone production in the testes: acts as a ligand for G protein-coupled receptor GPRC6A at the surface of Leydig cells, initiating a signaling response that promotes the expression of enzymes required for testosterone synthesis in a CREB-dependent manner. Also acts as a regulator of brain development: osteocalcin hormone crosses the blood-brain barrier and acts as a ligand for GPR158 on neurons, initiating a signaling response that prevents neuronal apoptosis in the hippocampus, favors the synthesis of all monoamine neurotransmitters and inhibits that of gamma-aminobutyric acid (GABA). Osteocalcin also crosses the placenta during pregnancy and maternal osteocalcin is required for fetal brain development. In Mus musculus (Mouse), this protein is Osteocalcin-2 (Bglap2).